We begin with the raw amino-acid sequence, 132 residues long: Small ribosomal subunit protein uS8 (132 aa).

Belongs to the universal ribosomal protein uS8 family. As to quaternary structure, part of the 30S ribosomal subunit. Contacts proteins S5 and S12.

One of the primary rRNA binding proteins, it binds directly to 16S rRNA central domain where it helps coordinate assembly of the platform of the 30S subunit. The polypeptide is Small ribosomal subunit protein uS8 (Streptococcus pyogenes serotype M1).